A 46-amino-acid polypeptide reads, in one-letter code: L-amino-acid oxidase (46 aa).

N-linked (GlcNAc...) asparagine glycosylation occurs at Asn-31.

It belongs to the flavin monoamine oxidase family. FIG1 subfamily. Requires FAD as cofactor.

The protein resides in the secreted. The protein localises to the lysosome. It is found in the cytoplasmic vesicle. Its subcellular location is the secretory vesicle. It localises to the acrosome. It carries out the reaction an L-alpha-amino acid + O2 + H2O = a 2-oxocarboxylate + H2O2 + NH4(+). The catalysed reaction is L-tryptophan + O2 + H2O = indole-3-pyruvate + H2O2 + NH4(+). The enzyme catalyses L-phenylalanine + O2 + H2O = 3-phenylpyruvate + H2O2 + NH4(+). It catalyses the reaction L-tyrosine + O2 + H2O = 3-(4-hydroxyphenyl)pyruvate + H2O2 + NH4(+). It carries out the reaction L-arginine + O2 + H2O = 5-guanidino-2-oxopentanoate + H2O2 + NH4(+). It functions in the pathway amino-acid degradation; L-tryptophan degradation via pyruvate pathway. In terms of biological role, secreted L-amino-acid oxidase that acts as a key immunoregulator. Has preference for L-aromatic amino acids: converts phenylalanine (Phe), tyrosine (Tyr) and tryptophan (Trp) to phenylpyruvic acid (PP), hydroxyphenylpyruvic acid (HPP), and indole-3-pyruvic acid (I3P), respectively. Also has weak L-arginine oxidase activity. Acts as a negative regulator of anti-tumor immunity by mediating Trp degradation via an indole pyruvate pathway that activates the transcription factor AHR. IL4I1-mediated Trp catabolism generates I3P, giving rise to indole metabolites (indole-3-acetic acid (IAA) and indole-3-aldehyde (I3A)) and kynurenic acid, which act as ligands for AHR, a ligand-activated transcription factor that plays important roles in immunity and cancer. AHR activation by indoles following IL4I1-mediated Trp degradation enhances tumor progression by promoting cancer cell motility and suppressing adaptive immunity. Also has an immunoregulatory function in some immune cells, probably by mediating Trp degradation and promoting downstream AHR activation: inhibits T-cell activation and proliferation, promotes the differentiation of naive CD4(+) T-cells into FOXP3(+) regulatory T-cells (Treg) and regulates the development and function of B-cells. Also regulates M2 macrophage polarization by inhibiting T-cell activation. Also has antibacterial properties by inhibiting growth of Gram negative and Gram positive bacteria through the production of NH4(+) and H2O2. The sequence is that of L-amino-acid oxidase from Mus spretus (Western Mediterranean mouse).